Reading from the N-terminus, the 137-residue chain is uncharacterized protein (137 aa).

The chain crosses the membrane as a helical span at residues 4-21 (ISWQIVLAVIGVVAGFII).

Its subcellular location is the membrane. This is an uncharacterized protein from Archaeoglobus fulgidus (strain ATCC 49558 / DSM 4304 / JCM 9628 / NBRC 100126 / VC-16).